The primary structure comprises 251 residues: tRNA (guanine-N(1)-)-methyltransferase (251 aa).

Residues glycine 113 and 133–138 contribute to the S-adenosyl-L-methionine site; that span reads IGDYVL.

Belongs to the RNA methyltransferase TrmD family. As to quaternary structure, homodimer.

The protein localises to the cytoplasm. The catalysed reaction is guanosine(37) in tRNA + S-adenosyl-L-methionine = N(1)-methylguanosine(37) in tRNA + S-adenosyl-L-homocysteine + H(+). Its function is as follows. Specifically methylates guanosine-37 in various tRNAs. The protein is tRNA (guanine-N(1)-)-methyltransferase of Pectobacterium carotovorum subsp. carotovorum (strain PC1).